Here is a 206-residue protein sequence, read N- to C-terminus: Transcription factor BTF3 (206 aa).

A disordered region spans residues 1-42; it reads MRRTGAPAQADSRGRGRARGGCPGGEATLSQPPPRGGTRGQE. R19 bears the Omega-N-methylarginine mark. S30 is subject to Phosphoserine. N6-methyllysine is present on residues K46 and K54. In terms of domain architecture, NAC-A/B spans 82–147; that stretch reads TADDKKLQFS…AETKQLTEML (66 aa). Position 160 is a phosphothreonine (T160). The interval 170–206 is disordered; sequence PKQSVDGKAPLATGEDDDDEVPDLVENFDEASKNEAN. S173 is modified (phosphoserine). Acidic residues predominate over residues 183–198; the sequence is GEDDDDEVPDLVENFD.

This sequence belongs to the NAC-beta family. In terms of assembly, part of the nascent polypeptide-associated complex (NAC), which is a heterodimer of NACA and BTF3 (via NAC-A/B domains). NAC associates with ribosomes through the BTF3/NACB subunit. Both subunits can contact nascent polypeptide chains.

The protein localises to the cytoplasm. Its subcellular location is the nucleus. In terms of biological role, when associated with NACA, prevents inappropriate targeting of non-secretory polypeptides to the endoplasmic reticulum (ER). Binds to nascent polypeptide chains as they emerge from the ribosome and blocks their interaction with the signal recognition particle (SRP), which normally targets nascent secretory peptides to the ER. BTF3 is also a general transcription factor that can form a stable complex with RNA polymerase II. Required for the initiation of transcription. In Homo sapiens (Human), this protein is Transcription factor BTF3 (BTF3).